The primary structure comprises 146 residues: uncharacterized protein (146 aa).

This is an uncharacterized protein from Orgyia pseudotsugata multicapsid polyhedrosis virus (OpMNPV).